The primary structure comprises 185 residues: uncharacterized protein (185 aa).

The disordered stretch occupies residues 160-185 (QYTGPAVPSVPTTNLNDIGDPTKTVQ).

This is an uncharacterized protein from Saccharomyces cerevisiae (strain ATCC 204508 / S288c) (Baker's yeast).